We begin with the raw amino-acid sequence, 73 residues long: Large ribosomal subunit protein bL28 (73 aa).

The protein belongs to the bacterial ribosomal protein bL28 family.

In Anaeromyxobacter sp. (strain Fw109-5), this protein is Large ribosomal subunit protein bL28.